The chain runs to 188 residues: ATP synthase subunit b (188 aa).

The chain crosses the membrane as a helical span at residues 19 to 39; that stretch reads VYVLGATIVSFLILFLFITYF.

The protein belongs to the ATPase B chain family. F-type ATPases have 2 components, F(1) - the catalytic core - and F(0) - the membrane proton channel. F(1) has five subunits: alpha(3), beta(3), gamma(1), delta(1), epsilon(1). F(0) has three main subunits: a(1), b(2) and c(10-14). The alpha and beta chains form an alternating ring which encloses part of the gamma chain. F(1) is attached to F(0) by a central stalk formed by the gamma and epsilon chains, while a peripheral stalk is formed by the delta and b chains.

The protein localises to the cell membrane. Functionally, f(1)F(0) ATP synthase produces ATP from ADP in the presence of a proton or sodium gradient. F-type ATPases consist of two structural domains, F(1) containing the extramembraneous catalytic core and F(0) containing the membrane proton channel, linked together by a central stalk and a peripheral stalk. During catalysis, ATP synthesis in the catalytic domain of F(1) is coupled via a rotary mechanism of the central stalk subunits to proton translocation. Its function is as follows. Component of the F(0) channel, it forms part of the peripheral stalk, linking F(1) to F(0). This Mesomycoplasma hyopneumoniae (strain J / ATCC 25934 / NCTC 10110) (Mycoplasma hyopneumoniae) protein is ATP synthase subunit b.